The following is a 1435-amino-acid chain: Cardiac-enriched FHL2-interacting protein (1435 aa).

4 disordered regions span residues 109–176 (EEKY…PPKF), 203–234 (SNTHQNSYQPGRKHGEQESSKNPEMACHGSSS), 250–270 (FPSPHHKPVTGEPGRGKGTFL), and 291–311 (KDTAGTVPESKAPKHYGDTTL). The residue at position 120 (Thr-120) is a Phosphothreonine. Positions 133–147 (LRSSNKPVSKVSTLI) are enriched in polar residues. The span at 149–160 (SFDRTESQRCES) shows a compositional bias: basic and acidic residues. Ser-323 is modified (phosphoserine). Disordered regions lie at residues 362 to 592 (EGKA…LTLS), 609 to 772 (AERS…EKEN), 795 to 847 (SQGE…SPSS), 1007 to 1108 (PEGD…ARVT), 1138 to 1261 (SPRG…PGGP), and 1363 to 1435 (QGPR…EGIS). Residues 389-402 (KGKESLQDTLEEKT) show a composition bias toward basic and acidic residues. Residue Ser-470 is modified to Phosphoserine. Composition is skewed to basic and acidic residues over residues 479–493 (QEKEPSECQSRDSYK), 522–535 (VLDEKTRGKVDGKQ), 609–620 (AERSSYENKEVE), and 650–667 (CNRDPEPGGATEKMKTHQ). Residues 668–679 (LENGLSRSVSQE) show a composition bias toward polar residues. Residues 727–741 (KFSTSSSDQSFASFD) are compositionally biased toward low complexity. The segment covering 751–772 (NQREDRRKDVSAGDSQKDEKEN) has biased composition (basic and acidic residues). At Ser-816 the chain carries Phosphoserine. The segment covering 831–847 (KGTTFSQAKDLTPSPSS) has biased composition (polar residues). The segment covering 1055–1066 (NSPNPGSPGESS) has biased composition (low complexity). A compositionally biased stretch (polar residues) spans 1067–1082 (ACSPAASNIWEESSQA). Positions 1083-1093 (PGGPELLPEEP) are enriched in low complexity. A compositionally biased stretch (polar residues) spans 1094 to 1105 (NQASPWASSSPA). Positions 1182–1193 (RRAKKLASKRRK) are enriched in basic residues. Residues 1194-1211 (TDQAQEKHGESQEGKPCP) are compositionally biased toward basic and acidic residues. Positions 1424–1435 (DDLEDFATEGIS) are enriched in acidic residues.

As to quaternary structure, interacts with FHL2. As to expression, expressed in the heart and skeletal muscle.

It localises to the cytoplasm. It is found in the myofibril. The protein localises to the sarcomere. Its subcellular location is the z line. Its function is as follows. Plays an important role in cardiomyocyte hypertrophy via activation of the calcineurin/NFAT signaling pathway. The chain is Cardiac-enriched FHL2-interacting protein from Homo sapiens (Human).